Here is a 221-residue protein sequence, read N- to C-terminus: HTH-type transcriptional regulator McbR (221 aa).

One can recognise an HTH gntR-type domain in the interval 10-77 (VSLTLQVEND…PAQAFTVPEV (68 aa)). Positions 37–56 (TKNLAEQLGMSITPVREALL) form a DNA-binding region, H-T-H motif.

In terms of biological role, important for biofilm formation. Represses expression of McbA by binding to its promoter region, which prevents colanic acid overproduction and mucoidy. The sequence is that of HTH-type transcriptional regulator McbR (mcbR) from Escherichia coli (strain K12).